We begin with the raw amino-acid sequence, 225 residues long: Thymidylate kinase (225 aa).

12 to 19 contributes to the ATP binding site; it reads GGEGAGKS.

This sequence belongs to the thymidylate kinase family.

The enzyme catalyses dTMP + ATP = dTDP + ADP. Its function is as follows. Phosphorylation of dTMP to form dTDP in both de novo and salvage pathways of dTTP synthesis. This chain is Thymidylate kinase, found in Chelativorans sp. (strain BNC1).